The primary structure comprises 436 residues: UDP-N-acetylmuramoylalanine--D-glutamate ligase (436 aa).

G112–T118 provides a ligand contact to ATP.

It belongs to the MurCDEF family.

Its subcellular location is the cytoplasm. It catalyses the reaction UDP-N-acetyl-alpha-D-muramoyl-L-alanine + D-glutamate + ATP = UDP-N-acetyl-alpha-D-muramoyl-L-alanyl-D-glutamate + ADP + phosphate + H(+). Its pathway is cell wall biogenesis; peptidoglycan biosynthesis. In terms of biological role, cell wall formation. Catalyzes the addition of glutamate to the nucleotide precursor UDP-N-acetylmuramoyl-L-alanine (UMA). This is UDP-N-acetylmuramoylalanine--D-glutamate ligase from Photorhabdus laumondii subsp. laumondii (strain DSM 15139 / CIP 105565 / TT01) (Photorhabdus luminescens subsp. laumondii).